A 213-amino-acid polypeptide reads, in one-letter code: Thymidylate kinase (213 aa).

Glycine 11 to threonine 18 contributes to the ATP binding site.

This sequence belongs to the thymidylate kinase family.

It catalyses the reaction dTMP + ATP = dTDP + ADP. In terms of biological role, phosphorylation of dTMP to form dTDP in both de novo and salvage pathways of dTTP synthesis. This Oenococcus oeni (strain ATCC BAA-331 / PSU-1) protein is Thymidylate kinase.